A 71-amino-acid polypeptide reads, in one-letter code: UPF0352 protein Swoo_2786 (71 aa).

This sequence belongs to the UPF0352 family.

This Shewanella woodyi (strain ATCC 51908 / MS32) protein is UPF0352 protein Swoo_2786.